The sequence spans 447 residues: MPNEQLRRMDAFTFPSYSIDLATGEALFDYALTGPDGEQRFTEVITLPLPAEPPSDATVATLGRVLELLHVVAGVSYYKAAAPRRLVLPAPLGEAAAALVTAVYTKGLAEYAYRNQLPHVLELTPEIPAGSVPPAREYDNSDLRPLSAVGGGKDSIVSLEALRRAGLDPVPFSVNPNHVIVAVNEASGLAPLAARRRIDPVLFDLNAAGARNGHIPVTAINSLIAVATAVLNRLGPVVMSNERSASDPNLVWNGHEINHQWSKGVEAEGLLRAALAEHAGLTEPYFSLLRSLSELHIARLFAQIDRYDDVVTSCNAAFKLRDASERWCRDCPKCRFVFLAMAPFMPRERVVHIFGGDLLADETQIPGYRELLGVDGHKPFECVGEVEESVVALSLLAEQDQWRDAPVVRALVDAVPETAWSAAATSDVFTPGGPHHIPPPYAKALAQ.

This sequence belongs to the MurL family.

It catalyses the reaction UDP-N-acetyl-alpha-D-muramoyl-L-alanyl-L-glutamate + ATP + H2O = UDP-N-acetyl-alpha-D-muramoyl-L-alanyl-D-glutamate + AMP + diphosphate + H(+). Its pathway is cell wall biogenesis; peptidoglycan biosynthesis. Functionally, cell wall formation. Catalyzes epimerization of the terminal L-glutamate in UDP-N-acetyl-alpha-D-muramoyl-L-alanyl-L-glutamate. The sequence is that of UDP-N-acetyl-alpha-D-muramoyl-L-alanyl-L-glutamate epimerase from Micromonospora sp. (strain ATCC 39149 / NRRL 15099 / SCC 1413).